A 349-amino-acid chain; its full sequence is Anthranilate phosphoribosyltransferase (349 aa).

5-phospho-alpha-D-ribose 1-diphosphate is bound by residues G86, 89–90, T94, 96–99, 114–122, and S126; these read GD, NIST, and KHGNKSASG. Position 86 (G86) interacts with anthranilate. Mg(2+) is bound at residue S98. Residue N117 coordinates anthranilate. R172 is an anthranilate binding site. Mg(2+) is bound by residues D231 and E232.

Belongs to the anthranilate phosphoribosyltransferase family. Homodimer. Mg(2+) is required as a cofactor.

The enzyme catalyses N-(5-phospho-beta-D-ribosyl)anthranilate + diphosphate = 5-phospho-alpha-D-ribose 1-diphosphate + anthranilate. It functions in the pathway amino-acid biosynthesis; L-tryptophan biosynthesis; L-tryptophan from chorismate: step 2/5. Its function is as follows. Catalyzes the transfer of the phosphoribosyl group of 5-phosphorylribose-1-pyrophosphate (PRPP) to anthranilate to yield N-(5'-phosphoribosyl)-anthranilate (PRA). The polypeptide is Anthranilate phosphoribosyltransferase (Prochlorococcus marinus (strain MIT 9312)).